Here is a 234-residue protein sequence, read N- to C-terminus: Small ribosomal subunit protein uS3 (234 aa).

A KH type-2 domain is found at 39–109; that stretch reads IRTLINKHYG…EVRIAIYEVK (71 aa).

The protein belongs to the universal ribosomal protein uS3 family. As to quaternary structure, part of the 30S ribosomal subunit. Forms a tight complex with proteins S10 and S14.

Binds the lower part of the 30S subunit head. Binds mRNA in the 70S ribosome, positioning it for translation. This chain is Small ribosomal subunit protein uS3, found in Coprothermobacter proteolyticus (strain ATCC 35245 / DSM 5265 / OCM 4 / BT).